A 433-amino-acid chain; its full sequence is PC-esterase domain-containing protein 1B (433 aa).

The disordered stretch occupies residues 386–433 (PPCHQRQAPVVHRGFPRHFARGPYSNPWRDRPRRPPKHSPAGLESRPQ).

The protein belongs to the PC-esterase family.

The polypeptide is PC-esterase domain-containing protein 1B (Pced1b) (Mus musculus (Mouse)).